The following is an 803-amino-acid chain: Phosphoribosylformylglycinamidine synthase subunit PurL (803 aa).

Histidine 65 is a catalytic residue. ATP is bound by residues tyrosine 68 and lysine 107. Position 109 (glutamate 109) interacts with Mg(2+). Substrate-binding positions include serine 110–histidine 113 and arginine 132. The active-site Proton acceptor is the histidine 111. Aspartate 133 contacts Mg(2+). Glutamine 256 is a substrate binding site. Residue aspartate 284 coordinates Mg(2+). Residue glutamate 328–glutamine 330 participates in substrate binding. Residues asparagine 537 and glycine 574 each contribute to the ATP site. A Mg(2+)-binding site is contributed by asparagine 575. Substrate is bound at residue serine 577.

This sequence belongs to the FGAMS family. In terms of assembly, monomer. Part of the FGAM synthase complex composed of 1 PurL, 1 PurQ and 2 PurS subunits.

The protein resides in the cytoplasm. It carries out the reaction N(2)-formyl-N(1)-(5-phospho-beta-D-ribosyl)glycinamide + L-glutamine + ATP + H2O = 2-formamido-N(1)-(5-O-phospho-beta-D-ribosyl)acetamidine + L-glutamate + ADP + phosphate + H(+). It functions in the pathway purine metabolism; IMP biosynthesis via de novo pathway; 5-amino-1-(5-phospho-D-ribosyl)imidazole from N(2)-formyl-N(1)-(5-phospho-D-ribosyl)glycinamide: step 1/2. Functionally, part of the phosphoribosylformylglycinamidine synthase complex involved in the purines biosynthetic pathway. Catalyzes the ATP-dependent conversion of formylglycinamide ribonucleotide (FGAR) and glutamine to yield formylglycinamidine ribonucleotide (FGAM) and glutamate. The FGAM synthase complex is composed of three subunits. PurQ produces an ammonia molecule by converting glutamine to glutamate. PurL transfers the ammonia molecule to FGAR to form FGAM in an ATP-dependent manner. PurS interacts with PurQ and PurL and is thought to assist in the transfer of the ammonia molecule from PurQ to PurL. This is Phosphoribosylformylglycinamidine synthase subunit PurL from Prochlorococcus marinus (strain NATL1A).